The primary structure comprises 79 residues: Immunity protein CdiI (79 aa).

The next 2 helical transmembrane spans lie at 12–32 and 51–71; these read IIFF…IGLI and VVLF…LGLW.

As to quaternary structure, probably interacts with cognate toxin CdiA.

It localises to the cell inner membrane. Functionally, immunity protein component of a toxin-immunity protein module, which functions as a cellular contact-dependent growth inhibition (CDI) system. CDI modules allow bacteria to communicate with and inhibit the growth of closely related neighboring bacteria in a contact-dependent fashion. Protects cells against CdiA from the same strain, its cognate toxin protein. Growth inhibition is reversible upon induction of this protein, occurring about 2.5 hours after induction, and requires an energy source. Does not protect against non-cognate CdiA from E.coli strain 563 / UPEC, D.dadantii strain 3937 or Y.pestis strain CO92. The protein is Immunity protein CdiI of Escherichia coli.